The sequence spans 73 residues: Photosystem I reaction center subunit IV (73 aa).

Belongs to the PsaE family.

It is found in the cellular thylakoid membrane. Stabilizes the interaction between PsaC and the PSI core, assists the docking of the ferredoxin to PSI and interacts with ferredoxin-NADP oxidoreductase. The chain is Photosystem I reaction center subunit IV from Synechococcus sp. (strain JA-3-3Ab) (Cyanobacteria bacterium Yellowstone A-Prime).